A 201-amino-acid chain; its full sequence is Syndecan-2 (201 aa).

An N-terminal signal peptide occupies residues Met1–Ala18. The Extracellular portion of the chain corresponds to Glu19–Glu144. 3 O-linked (Xyl...) (glycosaminoglycan) serine glycosylation sites follow: Ser41, Ser55, and Ser57. Disordered regions lie at residues Gly42–Thr70 and Thr90–Val130. Residues Thr90–Lys102 show a composition bias toward polar residues. An O-linked (GalNAc...) threonine glycan is attached at Thr101. A compositionally biased stretch (basic and acidic residues) spans Ser103–Pro123. Phosphoserine; by FAM20C is present on Ser115. The helical transmembrane segment at Val145 to Tyr169 threads the bilayer. Residues Arg170 to Ala201 lie on the Cytoplasmic side of the membrane. A disordered region spans residues Ser178 to Ala201. Ser187 is modified (phosphoserine).

Belongs to the syndecan proteoglycan family. Interacts (via cytoplasmic domain) with SARM1. Forms a complex with SDCBP and PDCD6IP. O-glycosylated with core 1 or possibly core 8 glycans. Contains heparan sulfate. Also contains chondroitin sulfate.

Its subcellular location is the membrane. Cell surface proteoglycan which regulates dendritic arbor morphogenesis. The sequence is that of Syndecan-2 (SDC2) from Homo sapiens (Human).